A 551-amino-acid polypeptide reads, in one-letter code: Nicotianamine aminotransferase B (551 aa).

A disordered region spans residues 24–127 (KSNGHGVAAA…GHAAAAAEEE (104 aa)). Residues 86–96 (GHRESNGHAEA) show a composition bias toward basic and acidic residues. Low complexity predominate over residues 111-123 (AANGESNGHAAAA). Lys-379 is subject to N6-(pyridoxal phosphate)lysine.

It belongs to the class-I pyridoxal-phosphate-dependent aminotransferase family. Pyridoxal 5'-phosphate is required as a cofactor. As to expression, expressed in roots, but not in leaves.

The catalysed reaction is nicotianamine + 2-oxoglutarate = 3''-deamino-3''-oxonicotianamine + L-glutamate. In terms of biological role, involved in biosynthesis of mugineic acid family phytosiderophores. This chain is Nicotianamine aminotransferase B, found in Hordeum vulgare (Barley).